The sequence spans 194 residues: Putative manganese efflux pump MntP (194 aa).

6 consecutive transmembrane segments (helical) span residues 3–23 (PFSIVLIGFAMSTDAFAAAIG), 37–57 (LRAGLIFGCIEAITPVIGWVL), 69–89 (DHWIAFVLLGALGTHMMIAGL), 110–132 (LGLATTGFATSIDAMAVGVSLAF), 147–167 (CTFSMVTAGVMLGRALGNLIG), and 172–192 (ILGGLILVIVGSVILYEHLGA).

It belongs to the MntP (TC 9.B.29) family.

The protein resides in the cell inner membrane. Its function is as follows. Probably functions as a manganese efflux pump. This is Putative manganese efflux pump MntP from Xanthomonas oryzae pv. oryzae (strain MAFF 311018).